A 257-amino-acid polypeptide reads, in one-letter code: MTQHSRDTPQFYLTAPSPCPYLPDRSERKVFTHLVGEKAGELNDLLTHGGFRRSQSIAYRPACDQCRACVSVRVIAGEFRPSRNFRKVLARNADIVSQLRAATPTSEQYSIFRAYLDQRHRDGGMADMTVLDYAMMVEDSHVETRIIEYRRRGADSDINERGDLVGVALTDVLSDGLSMVYSFFEPSEQNRSLGTFMILDHISRARQLGLPYVYLGYWIEGSRKMDYKGRFMPQQRLAPTGWLRVDAKDESQHESRD.

It belongs to the R-transferase family. Bpt subfamily.

It localises to the cytoplasm. It carries out the reaction N-terminal L-glutamyl-[protein] + L-leucyl-tRNA(Leu) = N-terminal L-leucyl-L-glutamyl-[protein] + tRNA(Leu) + H(+). The enzyme catalyses N-terminal L-aspartyl-[protein] + L-leucyl-tRNA(Leu) = N-terminal L-leucyl-L-aspartyl-[protein] + tRNA(Leu) + H(+). Its function is as follows. Functions in the N-end rule pathway of protein degradation where it conjugates Leu from its aminoacyl-tRNA to the N-termini of proteins containing an N-terminal aspartate or glutamate. The chain is Aspartate/glutamate leucyltransferase from Nitrobacter hamburgensis (strain DSM 10229 / NCIMB 13809 / X14).